We begin with the raw amino-acid sequence, 178 residues long: ATP synthase subunit delta (178 aa).

The protein belongs to the ATPase delta chain family. F-type ATPases have 2 components, F(1) - the catalytic core - and F(0) - the membrane proton channel. F(1) has five subunits: alpha(3), beta(3), gamma(1), delta(1), epsilon(1). F(0) has three main subunits: a(1), b(2) and c(10-14). The alpha and beta chains form an alternating ring which encloses part of the gamma chain. F(1) is attached to F(0) by a central stalk formed by the gamma and epsilon chains, while a peripheral stalk is formed by the delta and b chains.

It is found in the cell membrane. F(1)F(0) ATP synthase produces ATP from ADP in the presence of a proton or sodium gradient. F-type ATPases consist of two structural domains, F(1) containing the extramembraneous catalytic core and F(0) containing the membrane proton channel, linked together by a central stalk and a peripheral stalk. During catalysis, ATP synthesis in the catalytic domain of F(1) is coupled via a rotary mechanism of the central stalk subunits to proton translocation. Its function is as follows. This protein is part of the stalk that links CF(0) to CF(1). It either transmits conformational changes from CF(0) to CF(1) or is implicated in proton conduction. This is ATP synthase subunit delta from Geobacillus stearothermophilus (Bacillus stearothermophilus).